Reading from the N-terminus, the 361-residue chain is Serine/threonine-protein kinase SAPK9 (361 aa).

Residues 22-278 enclose the Protein kinase domain; sequence YELVKEIGSG…MPEIKNHPWF (257 aa). ATP-binding positions include 28 to 36 and Lys51; that span reads IGSGNFGVA. Asp141 serves as the catalytic Proton acceptor.

It belongs to the protein kinase superfamily. Ser/Thr protein kinase family. In terms of assembly, interacts with BZIP46. May be phosphorylated. In terms of tissue distribution, expressed in leaf sheaths and roots. Expressed in shoots of young seedlings.

It localises to the cytoplasm. The protein localises to the nucleus. It catalyses the reaction L-seryl-[protein] + ATP = O-phospho-L-seryl-[protein] + ADP + H(+). The catalysed reaction is L-threonyl-[protein] + ATP = O-phospho-L-threonyl-[protein] + ADP + H(+). With respect to regulation, activated by hyperosmotic stress and abscisic acid (ABA). Functionally, may play a role in signal transduction of hyperosmotic response. Can phosphorylate BZIP46 in vitro. The chain is Serine/threonine-protein kinase SAPK9 (SAPK9) from Oryza sativa subsp. japonica (Rice).